We begin with the raw amino-acid sequence, 227 residues long: Transmembrane emp24 domain-containing protein 1 (227 aa).

The signal sequence occupies residues 1–23; sequence MMAAGAALALALWLLMPPVGVGG. At 24-194 the chain is on the extracellular side; sequence AGPPPIQDGE…LQEGNLERVN (171 aa). Residues 43–125 enclose the GOLD domain; sequence KQCFYQSAPA…EKLVFFELIF (83 aa). Positions 145–170 form a coiled coil; sequence EMLDVKMEDIKESIETMRTRLERSIQ. The chain crosses the membrane as a helical span at residues 195 to 215; sequence FWSAVNVAVLLLVAVLQVCTL. Residues 216-227 lie on the Cytoplasmic side of the membrane; that stretch reads KRFFQDKRPVPT. A COPII vesicle coat-binding motif is present at residues 218 to 219; the sequence is FF. The COPI vesicle coat-binding motif lies at 218 to 227; the sequence is FFQDKRPVPT.

This sequence belongs to the EMP24/GP25L family. Homodimer in endoplasmic reticulum, endoplasmic reticulum-Golgi intermediate compartment and cis-Golgi network. Interacts with IL1RL1. Interacts with RNF26; this interaction is important to modulate innate immune signaling through the cGAS-STING pathway.

The protein resides in the cell membrane. It localises to the endoplasmic reticulum membrane. Its subcellular location is the golgi apparatus. It is found in the cis-Golgi network membrane. The protein localises to the endoplasmic reticulum-Golgi intermediate compartment membrane. In terms of biological role, potential role in vesicular protein trafficking, mainly in the early secretory pathway. May act as a cargo receptor at the lumenal side for incorporation of secretory cargo molecules into transport vesicles and may be involved in vesicle coat formation at the cytoplasmic side. Plays a positive role in IL-33-mediated IL-8 and IL-6 production by interacting with interleukin-33 receptor IL1RL1. Plays also a role in the modulation of innate immune signaling through the cGAS-STING pathway by interacting with RNF26. The sequence is that of Transmembrane emp24 domain-containing protein 1 (TMED1) from Pongo abelii (Sumatran orangutan).